An 80-amino-acid polypeptide reads, in one-letter code: DNA-directed RNA polymerase RPB10 homolog (80 aa).

Cys-7, Cys-10, Cys-65, and Cys-66 together coordinate Zn(2+).

This sequence belongs to the archaeal RpoN/eukaryotic RPB10 RNA polymerase subunit family. Part of the viral DNA-directed RNA polymerase that consists of 8 polII-like subunits (RPB1, RPB2, RPB3, RPB5, RPB6, RPB7, RPB9, RPB10), a capping enzyme and a termination factor.

The protein localises to the host cytoplasm. Its function is as follows. Component of the DNA-directed RNA polymerase (RNAP) that catalyzes the transcription in the cytoplasm of viral DNA into RNA using the four ribonucleoside triphosphates as substrates. This African swine fever virus (strain Badajoz 1971 Vero-adapted) (Ba71V) protein is DNA-directed RNA polymerase RPB10 homolog.